Here is a 397-residue protein sequence, read N- to C-terminus: MNIHEYQAKALLRQYGAPVSDGRVVMKADEAKAAAGELDGPLWVVKAQIHAGGRGKGHFKEKEAGEKGGVRLAKSVEEAEELARQMLGRTLVTHQTGETGKQVNRIYIEDGSDIERELYLALLVDRGTSRVSFVASTEGGMDIEEVAASTPEKIVSFSVDPASGLSDFHGRRVAFALGLSGAQVKQCVALVKNLYRMFIEKDMEMLEINPLIVMKDGNLKALDAKMGFDNNALYRQPDILALRDETEEDPKELAASKFDLNYIALDGEIGCMVNGAGLAMATMDIIKLFGAEPANFLDVGGGATKEKVTEAFKIITSDPNVKGILVNIFGGIMRCDIIAEGIIAAVKEVGLQVPLVVRLEGTNVELGKQIIGESGLNVIAADDLSDAAQKIVKAVKG.

The ATP-grasp domain occupies 9 to 254; it reads KALLRQYGAP…ETEEDPKELA (246 aa). Residues Lys-46, 53–55, Glu-109, Ser-112, and Glu-117 each bind ATP; that span reads GRG. The Mg(2+) site is built by Asn-209 and Asp-223. Residues Asn-274 and 331 to 333 each bind substrate; that span reads GIM.

The protein belongs to the succinate/malate CoA ligase beta subunit family. As to quaternary structure, heterotetramer of two alpha and two beta subunits. Mg(2+) serves as cofactor.

It carries out the reaction succinate + ATP + CoA = succinyl-CoA + ADP + phosphate. The catalysed reaction is GTP + succinate + CoA = succinyl-CoA + GDP + phosphate. It functions in the pathway carbohydrate metabolism; tricarboxylic acid cycle; succinate from succinyl-CoA (ligase route): step 1/1. Its function is as follows. Succinyl-CoA synthetase functions in the citric acid cycle (TCA), coupling the hydrolysis of succinyl-CoA to the synthesis of either ATP or GTP and thus represents the only step of substrate-level phosphorylation in the TCA. The beta subunit provides nucleotide specificity of the enzyme and binds the substrate succinate, while the binding sites for coenzyme A and phosphate are found in the alpha subunit. The chain is Succinate--CoA ligase [ADP-forming] subunit beta from Paracoccus denitrificans (strain Pd 1222).